The chain runs to 591 residues: Cineole synthase 1, chloroplastic (591 aa).

The N-terminal 44 residues, 1 to 44 (MSSLIMQVVIPKPAKFFHNNLFSLSSKRHRFSTTTTTRGGRWAR), are a transit peptide targeting the chloroplast. (2E)-geranyl diphosphate contacts are provided by arginine 308, aspartate 345, aspartate 349, arginine 486, and aspartate 489. Residues aspartate 345 and aspartate 349 each coordinate Mg(2+). Positions 345–349 (DDVFD) match the DDXXD motif motif. Aspartate 489, threonine 493, and glutamate 497 together coordinate Mg(2+).

This sequence belongs to the terpene synthase family. Tpsb subfamily. Monomer. Mg(2+) serves as cofactor. It depends on Mn(2+) as a cofactor.

Its subcellular location is the plastid. The protein localises to the chloroplast. It catalyses the reaction (2E)-geranyl diphosphate + H2O = 1,8-cineole + diphosphate. It carries out the reaction (2E)-geranyl diphosphate = alpha-pinene + diphosphate. The catalysed reaction is (2E)-geranyl diphosphate = beta-pinene + diphosphate. The enzyme catalyses (2E)-geranyl diphosphate + H2O = (S)-alpha-terpineol + diphosphate. It catalyses the reaction (2E)-geranyl diphosphate = beta-myrcene + diphosphate. It carries out the reaction (2E)-geranyl diphosphate = sabinene + diphosphate. It participates in secondary metabolite biosynthesis; terpenoid biosynthesis. Its function is as follows. Monoterpene synthase (TPS) involved in the biosynthesis of monoterpene natural products, components of the chemical defense arsenal. Catalyzes the conversion of (2E)-geranyl diphosphate (GPP) into 1,8-cineole, and, as minor products, alpha-terpineol, beta-pinene, alpha-pinene, sabinene and myrcene. This chain is Cineole synthase 1, chloroplastic, found in Salvia fruticosa (Greek sage).